A 206-amino-acid polypeptide reads, in one-letter code: Thymidylate kinase (206 aa).

14–21 (GGEGIGKS) is an ATP binding site.

Belongs to the thymidylate kinase family.

It catalyses the reaction dTMP + ATP = dTDP + ADP. Phosphorylation of dTMP to form dTDP in both de novo and salvage pathways of dTTP synthesis. In Rickettsia bellii (strain RML369-C), this protein is Thymidylate kinase.